The primary structure comprises 580 residues: Amino-acid acetyltransferase, mitochondrial (580 aa).

The N-acetyltransferase domain occupies Leu403–Asn560.

It belongs to the acetyltransferase family.

Its subcellular location is the mitochondrion. It carries out the reaction L-glutamate + acetyl-CoA = N-acetyl-L-glutamate + CoA + H(+). It participates in amino-acid biosynthesis; L-arginine biosynthesis; N(2)-acetyl-L-ornithine from L-glutamate: step 1/4. In terms of biological role, N-acetylglutamate synthase involved in arginine biosynthesis. In Candida dubliniensis (strain CD36 / ATCC MYA-646 / CBS 7987 / NCPF 3949 / NRRL Y-17841) (Yeast), this protein is Amino-acid acetyltransferase, mitochondrial (ARG2).